A 354-amino-acid polypeptide reads, in one-letter code: Probable serine acetyltransferase 2 (354 aa).

The protein belongs to the transferase hexapeptide repeat family. Homomultimer.

The enzyme catalyses L-serine + acetyl-CoA = O-acetyl-L-serine + CoA. Its pathway is amino-acid biosynthesis; L-cysteine biosynthesis; L-cysteine from L-serine: step 1/2. This chain is Probable serine acetyltransferase 2 (SAT2), found in Oryza sativa subsp. japonica (Rice).